A 98-amino-acid polypeptide reads, in one-letter code: NADH-ubiquinone oxidoreductase chain 4L (98 aa).

The next 3 membrane-spanning stretches (helical) occupy residues 1–21, 29–49, and 61–81; these read MTPT…GMLT, SLLC…LIAL, and IILL…LVSI.

The protein belongs to the complex I subunit 4L family. As to quaternary structure, core subunit of respiratory chain NADH dehydrogenase (Complex I) which is composed of 45 different subunits.

It localises to the mitochondrion inner membrane. It carries out the reaction a ubiquinone + NADH + 5 H(+)(in) = a ubiquinol + NAD(+) + 4 H(+)(out). Functionally, core subunit of the mitochondrial membrane respiratory chain NADH dehydrogenase (Complex I) which catalyzes electron transfer from NADH through the respiratory chain, using ubiquinone as an electron acceptor. Part of the enzyme membrane arm which is embedded in the lipid bilayer and involved in proton translocation. This Macaca pagensis (Mentawai macaque) protein is NADH-ubiquinone oxidoreductase chain 4L (MT-ND4L).